A 1071-amino-acid chain; its full sequence is ATP-dependent helicase/deoxyribonuclease subunit B (1071 aa).

Belongs to the helicase family. AddB/RexB type 2 subfamily. Heterodimer of AddA and RexB. Requires Mg(2+) as cofactor.

In terms of biological role, the heterodimer acts as both an ATP-dependent DNA helicase and an ATP-dependent, dual-direction single-stranded exonuclease. Recognizes the chi site generating a DNA molecule suitable for the initiation of homologous recombination. This subunit has 5' -&gt; 3' nuclease activity but not helicase activity. In Streptococcus pyogenes serotype M12 (strain MGAS2096), this protein is ATP-dependent helicase/deoxyribonuclease subunit B.